The chain runs to 266 residues: Cell division cycle-associated protein 3 (266 aa).

Residues 1–84 (MGSTQSVSGT…TPMKISGPDP (84 aa)) form a disordered region. Ser-29 and Ser-31 each carry phosphoserine. The segment covering 32-46 (AGIQRTPIQVESSPQ) has biased composition (polar residues). Thr-37 carries the phosphothreonine modification. A phosphoserine mark is found at Ser-44 and Ser-67. The residue at position 75 (Thr-75) is a Phosphothreonine. The tract at residues 90-119 (KELSEVLETEASESISSPELALPRETPLFY) is F-box-like. Phosphoserine is present on Ser-93. 2 disordered regions span residues 120 to 225 (DLDL…LSEN) and 242 to 266 (KAGG…LLES). A compositionally biased stretch (basic and acidic residues) spans 143 to 156 (LDPKQVFTKEEAKQ). The span at 157 to 168 (SAETIAASQNSD) shows a compositional bias: polar residues. Position 197 is a phosphoserine (Ser-197). Thr-200 is modified (phosphothreonine). A compositionally biased stretch (polar residues) spans 203–213 (QDDNSPGTLTL). Ser-207 bears the Phosphoserine mark. Position 210 is a phosphothreonine (Thr-210). A compositionally biased stretch (basic and acidic residues) spans 250–259 (PNQDHDKENQ). The KEN box motif lies at 256–258 (KEN).

In terms of assembly, interacts with SKP1. Part of a SCF (SKP1-cullin-F-box) protein ligase complex. Ubiquitinated and degraded by the APC/C-Cdh1 complex.

The protein resides in the cytoplasm. Its subcellular location is the cytosol. The protein operates within protein modification; protein ubiquitination. Its function is as follows. F-box-like protein which is required for entry into mitosis. Acts by participating in E3 ligase complexes that mediate the ubiquitination and degradation of WEE1 kinase at G2/M phase. This chain is Cell division cycle-associated protein 3 (Cdca3), found in Mus musculus (Mouse).